The following is a 143-amino-acid chain: Periplasmic nitrate reductase, electron transfer subunit (143 aa).

Positions 1-22 (MKKILTLAAIVLAIGGCSGQQA) are cleaved as a signal peptide. Positions 72, 85, 88, 89, 106, 121, 124, and 125 each coordinate heme c.

The protein belongs to the NapB family. As to quaternary structure, component of the periplasmic nitrate reductase NapAB complex composed of NapA and NapB. In terms of processing, binds 2 heme C groups per subunit.

It localises to the periplasm. Electron transfer subunit of the periplasmic nitrate reductase complex NapAB. Receives electrons from the membrane-anchored tetraheme c-type CymA protein and transfers these to NapA subunit, thus allowing electron flow between membrane and periplasm. Not essential for nitrate reduction but confers advantage to the organism when grown on nitrate and thereby a fitness gain in utilizing nitrate. The protein is Periplasmic nitrate reductase, electron transfer subunit of Shewanella oneidensis (strain ATCC 700550 / JCM 31522 / CIP 106686 / LMG 19005 / NCIMB 14063 / MR-1).